We begin with the raw amino-acid sequence, 329 residues long: DNA-directed RNA polymerase subunit alpha (329 aa).

The alpha N-terminal domain (alpha-NTD) stretch occupies residues 1 to 234; the sequence is MQSAVNEFLT…QQLAVFVDLE (234 aa). The interval 248–329 is alpha C-terminal domain (alpha-CTD); sequence IDPVLLRPVD…WPPASLKNND (82 aa).

This sequence belongs to the RNA polymerase alpha chain family. In terms of assembly, homodimer. The RNAP catalytic core consists of 2 alpha, 1 beta, 1 beta' and 1 omega subunit. When a sigma factor is associated with the core the holoenzyme is formed, which can initiate transcription.

It catalyses the reaction RNA(n) + a ribonucleoside 5'-triphosphate = RNA(n+1) + diphosphate. In terms of biological role, DNA-dependent RNA polymerase catalyzes the transcription of DNA into RNA using the four ribonucleoside triphosphates as substrates. In Saccharophagus degradans (strain 2-40 / ATCC 43961 / DSM 17024), this protein is DNA-directed RNA polymerase subunit alpha.